Reading from the N-terminus, the 958-residue chain is Collagen alpha-1(I) chain (958 aa).

The interval Gly1–Pro958 is disordered. The segment covering Asn50–Glu64 has biased composition (basic and acidic residues). Residue Ser92 is modified to Phosphoserine. Low complexity-rich tracts occupy residues Asp100–Asn116 and Pro139–Ala152. Positions Pro154 to Phe166 are enriched in pro residues. Low complexity predominate over residues Ala216–Ser232. Over residues Gly294–Gly303 the composition is skewed to gly residues. Low complexity-rich tracts occupy residues Phe304–Ala335, Lys347–Arg373, Ala382–Pro401, Ser557–Ala571, Ala584–Ala614, Ser640–Val656, Glu685–Glu694, and Ala704–Ala728. Ser560 carries the post-translational modification Phosphoserine. 2 stretches are compositionally biased toward pro residues: residues Pro769–Ala779 and Ala808–Val823. Basic and acidic residues predominate over residues Arg859–Ile873. A compositionally biased stretch (low complexity) spans Pro892–Pro925. A compositionally biased stretch (pro residues) spans Val943–Pro958.

It belongs to the fibrillar collagen family. As to quaternary structure, trimers of one alpha 2(I) and two alpha 1(I) chains. Post-translationally, prolines at the third position of the tripeptide repeating unit (G-X-Y) are hydroxylated in some or all of the chains. As to expression, forms the fibrils of tendon, ligaments and bones. In bones, the fibrils are mineralized with calcium hydroxyapatite.

Its subcellular location is the secreted. The protein resides in the extracellular space. It localises to the extracellular matrix. Type I collagen is a member of group I collagen (fibrillar forming collagen). This Macrauchenia sp protein is Collagen alpha-1(I) chain.